A 346-amino-acid polypeptide reads, in one-letter code: MESKTINDVVVSESNHELASSSPSEFEKNQKHYQEIIATLPHKDGWRPKDPFVEYGGHWWLQPLLEGLLHAQKFFKARPNDFFVCSYPKTGTTWLKALTFAIANRSKFDVSTNPLLKRNPHEFVPYIEIDFPFFPSVDVLKDEGNTLFSTHIPYDLLPESVVKSGCKIVYIWRDPKDTFVSMWTFAHKERSQQGPVVSIEEAFDKYCQGLSAYGPYLDHVLGYWKAYQANPDQILFLKYETMRADPLPYVKRLAEFMGYGFTKEEEEGNVVEKVVKLCSFETLKNLEANKGEKDREDRPAVYANSAYFRKGKVGDWQNYLTPEMVARIDGLMEEKFKGTGFLSSKS.

3'-phosphoadenylyl sulfate is bound at residue 89–94 (KTGTTW). His151 (proton acceptor) is an active-site residue. Residues Arg173, Ser181, Tyr239, and 309–311 (RKG) contribute to the 3'-phosphoadenylyl sulfate site.

Belongs to the sulfotransferase 1 family. In terms of tissue distribution, highly expressed in roots, stems and mature leaves. Low expression in young leaves and flowers. Barely detected in siliques.

The protein resides in the cytoplasm. It carries out the reaction an aliphatic (Z)-desulfo-glucosinolate + 3'-phosphoadenylyl sulfate = a (Z)-omega-(methylsulfanyl)-N-sulfo-alkylhydroximate S-glucoside + adenosine 3',5'-bisphosphate + H(+). Its activity is regulated as follows. Inhibited by phosphoadenosine 5'-phosphate (PAP). In terms of biological role, sulfotransferase that utilizes 3'-phospho-5'-adenylyl sulfate (PAPS) as sulfonate donor to catalyze the sulfate conjugation of desulfo-glucosinolates (dsGSs), the final step in the biosynthesis of the glucosinolate core structure. Substrate preference is desulfo-benzyl glucosinolate &gt; desulfo-6-methylthiohexyl glucosinolate. Increased specific activity with increasing chain length of desulfo-glucosinolate derived from methionine. Preferred substrate is desulfo-8-methylthiooctyl glucosinolate. This chain is Cytosolic sulfotransferase 17 (SOT17), found in Arabidopsis thaliana (Mouse-ear cress).